The following is a 182-amino-acid chain: Isopentenyl-diphosphate Delta-isomerase (182 aa).

The Mn(2+) site is built by His-25 and His-32. Residues 30–164 (LLHLAFSSWL…PWAFSPWMVM (135 aa)) form the Nudix hydrolase domain. Residue Cys-67 is part of the active site. Residue Cys-67 coordinates Mg(2+). A Mn(2+)-binding site is contributed by His-69. Residue Glu-87 coordinates Mg(2+). Positions 114 and 116 each coordinate Mn(2+). The active site involves Glu-116.

This sequence belongs to the IPP isomerase type 1 family. As to quaternary structure, homodimer. Mg(2+) serves as cofactor. The cofactor is Mn(2+).

Its subcellular location is the cytoplasm. The enzyme catalyses isopentenyl diphosphate = dimethylallyl diphosphate. It participates in isoprenoid biosynthesis; dimethylallyl diphosphate biosynthesis; dimethylallyl diphosphate from isopentenyl diphosphate: step 1/1. Functionally, catalyzes the 1,3-allylic rearrangement of the homoallylic substrate isopentenyl (IPP) to its highly electrophilic allylic isomer, dimethylallyl diphosphate (DMAPP). The polypeptide is Isopentenyl-diphosphate Delta-isomerase (Shigella boydii serotype 4 (strain Sb227)).